The primary structure comprises 669 residues: DNA ligase (669 aa).

Residues 34-38 (DAEYD), 83-84 (SL), and Glu-114 each bind NAD(+). Lys-116 (N6-AMP-lysine intermediate) is an active-site residue. Residues Arg-137, Glu-171, Lys-287, and Lys-311 each coordinate NAD(+). The Zn(2+) site is built by Cys-405, Cys-408, Cys-423, and Cys-428. Positions 591 to 669 (NIASYFAGKT…EERFLQELNK (79 aa)) constitute a BRCT domain.

Belongs to the NAD-dependent DNA ligase family. LigA subfamily. Mg(2+) is required as a cofactor. Requires Mn(2+) as cofactor.

It catalyses the reaction NAD(+) + (deoxyribonucleotide)n-3'-hydroxyl + 5'-phospho-(deoxyribonucleotide)m = (deoxyribonucleotide)n+m + AMP + beta-nicotinamide D-nucleotide.. Functionally, DNA ligase that catalyzes the formation of phosphodiester linkages between 5'-phosphoryl and 3'-hydroxyl groups in double-stranded DNA using NAD as a coenzyme and as the energy source for the reaction. It is essential for DNA replication and repair of damaged DNA. This Bacillus cytotoxicus (strain DSM 22905 / CIP 110041 / 391-98 / NVH 391-98) protein is DNA ligase.